Consider the following 95-residue polypeptide: DNA-directed RNA polymerase subunit Rpo11 (95 aa).

Belongs to the archaeal Rpo11/eukaryotic RPB11/RPC19 RNA polymerase subunit family. In terms of assembly, part of the RNA polymerase complex.

It is found in the cytoplasm. It carries out the reaction RNA(n) + a ribonucleoside 5'-triphosphate = RNA(n+1) + diphosphate. DNA-dependent RNA polymerase (RNAP) catalyzes the transcription of DNA into RNA using the four ribonucleoside triphosphates as substrates. This Thermococcus sibiricus (strain DSM 12597 / MM 739) protein is DNA-directed RNA polymerase subunit Rpo11.